A 176-amino-acid polypeptide reads, in one-letter code: Cytochrome c oxidase subunit 4 isoform 2, mitochondrial (176 aa).

The transit peptide at M1–M28 directs the protein to the mitochondrion. Topologically, residues A29 to S106 are mitochondrial matrix. Residues E107–Y132 traverse the membrane as a helical segment. Topologically, residues V133–K176 are mitochondrial intermembrane.

This sequence belongs to the cytochrome c oxidase IV family. As to quaternary structure, component of the cytochrome c oxidase (complex IV, CIV), a multisubunit enzyme composed of 14 subunits. The complex is composed of a catalytic core of 3 subunits MT-CO1, MT-CO2 and MT-CO3, encoded in the mitochondrial DNA, and 11 supernumerary subunits COX4I, COX5A, COX5B, COX6A, COX6B, COX6C, COX7A, COX7B, COX7C, COX8 and NDUFA4, which are encoded in the nuclear genome. The complex exists as a monomer or a dimer and forms supercomplexes (SCs) in the inner mitochondrial membrane with NADH-ubiquinone oxidoreductase (complex I, CI) and ubiquinol-cytochrome c oxidoreductase (cytochrome b-c1 complex, complex III, CIII), resulting in different assemblies (supercomplex SCI(1)III(2)IV(1) and megacomplex MCI(2)III(2)IV(2)).

It localises to the mitochondrion inner membrane. The protein operates within energy metabolism; oxidative phosphorylation. Component of the cytochrome c oxidase, the last enzyme in the mitochondrial electron transport chain which drives oxidative phosphorylation. The respiratory chain contains 3 multisubunit complexes succinate dehydrogenase (complex II, CII), ubiquinol-cytochrome c oxidoreductase (cytochrome b-c1 complex, complex III, CIII) and cytochrome c oxidase (complex IV, CIV), that cooperate to transfer electrons derived from NADH and succinate to molecular oxygen, creating an electrochemical gradient over the inner membrane that drives transmembrane transport and the ATP synthase. Cytochrome c oxidase is the component of the respiratory chain that catalyzes the reduction of oxygen to water. Electrons originating from reduced cytochrome c in the intermembrane space (IMS) are transferred via the dinuclear copper A center (CU(A)) of subunit 2 and heme A of subunit 1 to the active site in subunit 1, a binuclear center (BNC) formed by heme A3 and copper B (CU(B)). The BNC reduces molecular oxygen to 2 water molecules using 4 electrons from cytochrome c in the IMS and 4 protons from the mitochondrial matrix. This is Cytochrome c oxidase subunit 4 isoform 2, mitochondrial from Thunnus obesus (Bigeye tuna).